A 425-amino-acid chain; its full sequence is Serine hydroxymethyltransferase (425 aa).

(6S)-5,6,7,8-tetrahydrofolate is bound by residues Leu-128 and 132 to 134 (GHL). At Lys-237 the chain carries N6-(pyridoxal phosphate)lysine.

Belongs to the SHMT family. As to quaternary structure, homodimer. Pyridoxal 5'-phosphate is required as a cofactor.

The protein resides in the cytoplasm. It catalyses the reaction (6R)-5,10-methylene-5,6,7,8-tetrahydrofolate + glycine + H2O = (6S)-5,6,7,8-tetrahydrofolate + L-serine. The protein operates within one-carbon metabolism; tetrahydrofolate interconversion. It participates in amino-acid biosynthesis; glycine biosynthesis; glycine from L-serine: step 1/1. In terms of biological role, catalyzes the reversible interconversion of serine and glycine with tetrahydrofolate (THF) serving as the one-carbon carrier. This reaction serves as the major source of one-carbon groups required for the biosynthesis of purines, thymidylate, methionine, and other important biomolecules. Also exhibits THF-independent aldolase activity toward beta-hydroxyamino acids, producing glycine and aldehydes, via a retro-aldol mechanism. The chain is Serine hydroxymethyltransferase from Wolbachia sp. subsp. Drosophila simulans (strain wRi).